The chain runs to 905 residues: DNA mismatch repair protein MutS (905 aa).

A disordered region spans residues 388–410 (LERPANPEGTYPTDAETSGDTLP). 638-645 (GPNMAGKS) serves as a coordination point for ATP. The segment at 826-847 (RDAARGTNSAPSRQTLPGLDLP) is disordered. Polar residues predominate over residues 831 to 840 (GTNSAPSRQT).

Belongs to the DNA mismatch repair MutS family.

Its function is as follows. This protein is involved in the repair of mismatches in DNA. It is possible that it carries out the mismatch recognition step. This protein has a weak ATPase activity. The protein is DNA mismatch repair protein MutS of Nitratidesulfovibrio vulgaris (strain DP4) (Desulfovibrio vulgaris).